Here is a 247-residue protein sequence, read N- to C-terminus: PHD finger protein ALFIN-LIKE 3 (247 aa).

The disordered stretch occupies residues D147–E178. Residues E188–S240 form a PHD-type zinc finger.

The protein belongs to the Alfin family. As to quaternary structure, interacts with H3K4me3 and to a lesser extent with H3K4me2.

It localises to the nucleus. Histone-binding component that specifically recognizes H3 tails trimethylated on 'Lys-4' (H3K4me3), which mark transcription start sites of virtually all active genes. This Oryza sativa subsp. indica (Rice) protein is PHD finger protein ALFIN-LIKE 3.